The following is a 488-amino-acid chain: Glutamyl-tRNA(Gln) amidotransferase subunit A (488 aa).

Residues Lys-77 and Ser-152 each act as charge relay system in the active site. The Acyl-ester intermediate role is filled by Ser-176.

Belongs to the amidase family. GatA subfamily. Heterotrimer of A, B and C subunits.

It carries out the reaction L-glutamyl-tRNA(Gln) + L-glutamine + ATP + H2O = L-glutaminyl-tRNA(Gln) + L-glutamate + ADP + phosphate + H(+). Functionally, allows the formation of correctly charged Gln-tRNA(Gln) through the transamidation of misacylated Glu-tRNA(Gln) in organisms which lack glutaminyl-tRNA synthetase. The reaction takes place in the presence of glutamine and ATP through an activated gamma-phospho-Glu-tRNA(Gln). The protein is Glutamyl-tRNA(Gln) amidotransferase subunit A of Streptococcus gordonii (strain Challis / ATCC 35105 / BCRC 15272 / CH1 / DL1 / V288).